Here is a 65-residue protein sequence, read N- to C-terminus: Hirudin-2B (65 aa).

An interaction with thrombin active site region spans residues 1–3 (ITY). Disulfide bonds link Cys-6–Cys-14, Cys-16–Cys-28, and Cys-22–Cys-39. The interval 39-65 (CVTGEGTPKPQSHNDGDFEEIPEEYLQ) is disordered. Thr-45 carries an O-linked (GalNAc...) threonine glycan. Positions 55–65 (DFEEIPEEYLQ) are interaction with fibrinogen-binding exosite of thrombin. Over residues 55–65 (DFEEIPEEYLQ) the composition is skewed to acidic residues. Tyr-63 bears the Sulfotyrosine mark.

Belongs to the protease inhibitor I14 (hirudin) family.

The protein localises to the secreted. Its function is as follows. Hirudin is a potent thrombin-specific protease inhibitor. It forms a stable non-covalent complex with alpha-thrombin, thereby abolishing its ability to cleave fibrinogen. This Hirudo medicinalis (Medicinal leech) protein is Hirudin-2B.